The following is a 101-amino-acid chain: Small ribosomal subunit protein uS14 (101 aa).

The protein belongs to the universal ribosomal protein uS14 family. Part of the 30S ribosomal subunit. Contacts proteins S3 and S10.

In terms of biological role, binds 16S rRNA, required for the assembly of 30S particles and may also be responsible for determining the conformation of the 16S rRNA at the A site. This Methylorubrum populi (strain ATCC BAA-705 / NCIMB 13946 / BJ001) (Methylobacterium populi) protein is Small ribosomal subunit protein uS14.